Here is a 484-residue protein sequence, read N- to C-terminus: tRNA-2-methylthio-N(6)-dimethylallyladenosine synthase (484 aa).

Positions 29–149 constitute an MTTase N-terminal domain; sequence GVFHIHTLGC…LPKLLDQNRA (121 aa). [4Fe-4S] cluster is bound by residues Cys-38, Cys-78, Cys-112, Cys-186, Cys-190, and Cys-193. One can recognise a Radical SAM core domain in the interval 172-401; that stretch reads RASRISSWVA…VALQEQITEE (230 aa). A TRAM domain is found at 404–474; sequence ATFEGRDVEV…RHNLLADPDV (71 aa).

Belongs to the methylthiotransferase family. MiaB subfamily. In terms of assembly, monomer. Requires [4Fe-4S] cluster as cofactor.

It localises to the cytoplasm. It catalyses the reaction N(6)-dimethylallyladenosine(37) in tRNA + (sulfur carrier)-SH + AH2 + 2 S-adenosyl-L-methionine = 2-methylsulfanyl-N(6)-dimethylallyladenosine(37) in tRNA + (sulfur carrier)-H + 5'-deoxyadenosine + L-methionine + A + S-adenosyl-L-homocysteine + 2 H(+). Catalyzes the methylthiolation of N6-(dimethylallyl)adenosine (i(6)A), leading to the formation of 2-methylthio-N6-(dimethylallyl)adenosine (ms(2)i(6)A) at position 37 in tRNAs that read codons beginning with uridine. The sequence is that of tRNA-2-methylthio-N(6)-dimethylallyladenosine synthase from Bifidobacterium longum subsp. infantis (strain ATCC 15697 / DSM 20088 / JCM 1222 / NCTC 11817 / S12).